A 497-amino-acid polypeptide reads, in one-letter code: MEKSWFNSMLSKGEVEYRCGLSKSMDSLGPIENTSISEDPVINDPDKNIYNSIWGESSSYYSNVDHLVGAKDIRNFISDDTFLVRDSNRDSYSIYFDIENNNFEIDNDHSFLSELESFFYSYRNSSYMNNRSKSDDPHYDPYMYDTKYSWTNHINSCIDSYLRSQICIDSSILSGSDNYNDSYIYNYICSESGKSSESENSNIRTNTNRSDLTIKESSNDLDITQKYRHLWVQCENCYGLNYKKFLKSKMNICEQCGYYLKMSSSDRIELLVDPGTWNPMDENMVSLDPIEFHSEEEPYKDRIDSYQRKTGLTEAVQTGTGQLNGIPIALGVMDFQFMGGSMGSVVGEKITRLIEYATNEFLPLIIVCASGGARMQEGSLSLMQMAKISSALYDYQSNKKLFYVSILTSPTTGGVTASFGMLGDIIIAEPNAYIAFAGKRVIEQTLNKTVPEGSQAAEYLFHKGLFDSIVPRNPLKGVLSELFQLHGFFPLNQNSIK.

In terms of domain architecture, CoA carboxyltransferase N-terminal spans 230–497; that stretch reads LWVQCENCYG…FFPLNQNSIK (268 aa). The Zn(2+) site is built by cysteine 234, cysteine 237, cysteine 253, and cysteine 256. Residues 234 to 256 form a C4-type zinc finger; it reads CENCYGLNYKKFLKSKMNICEQC.

It belongs to the AccD/PCCB family. Acetyl-CoA carboxylase is a heterohexamer composed of biotin carboxyl carrier protein, biotin carboxylase and 2 subunits each of ACCase subunit alpha and ACCase plastid-coded subunit beta (accD). Zn(2+) is required as a cofactor.

The protein resides in the plastid. Its subcellular location is the chloroplast stroma. The enzyme catalyses N(6)-carboxybiotinyl-L-lysyl-[protein] + acetyl-CoA = N(6)-biotinyl-L-lysyl-[protein] + malonyl-CoA. Its pathway is lipid metabolism; malonyl-CoA biosynthesis; malonyl-CoA from acetyl-CoA: step 1/1. Component of the acetyl coenzyme A carboxylase (ACC) complex. Biotin carboxylase (BC) catalyzes the carboxylation of biotin on its carrier protein (BCCP) and then the CO(2) group is transferred by the transcarboxylase to acetyl-CoA to form malonyl-CoA. This Carica papaya (Papaya) protein is Acetyl-coenzyme A carboxylase carboxyl transferase subunit beta, chloroplastic.